Consider the following 300-residue polypeptide: MAEKNRLVTVAALQFACTDDVSTNVATAERLVRAAHQKGANIILIQELFEGYYFCQAQKEEFFHRAKPYPGHPTIVRMQNLAKELGVVIPVSFFEEANNAHYNSVAIIDADGTDLGLYRKSHIPDGPGYQEKYYFNPGDTGFKVFQTKYAKIGVAICWDQWFPEAARAMALQGAEVLFYPTAIGSEPQDDGLDSRDHWRRVMQGHAGANVVPLVASNRIGKEIIETEHGNSEITFYGYSFIAGPTGELVAAAGDKEEAVLVAQFDLDKIKSKRHGWGVYRDRRPDLYKVLLTLDGSNPVK.

Residues Val8–Leu266 form the CN hydrolase domain. Glu47 acts as the Proton acceptor in catalysis. Lys120 acts as the Proton donor in catalysis. The active-site Nucleophile is Cys157.

This sequence belongs to the carbon-nitrogen hydrolase superfamily. In terms of assembly, homooctamer.

It catalyses the reaction N-carbamoylputrescine + H2O + 2 H(+) = putrescine + NH4(+) + CO2. The protein operates within amine and polyamine biosynthesis; putrescine biosynthesis via agmatine pathway; putrescine from N-carbamoylputrescine (amidase route): step 1/1. Functionally, involved in polyamine biosynthesis. The chain is N-carbamoylputrescine amidase (CPA) from Solanum lycopersicum (Tomato).